The following is an 85-amino-acid chain: UPF0335 protein Plav_2034 (85 aa).

The protein belongs to the UPF0335 family.

This chain is UPF0335 protein Plav_2034, found in Parvibaculum lavamentivorans (strain DS-1 / DSM 13023 / NCIMB 13966).